Reading from the N-terminus, the 494-residue chain is GTPase Der (494 aa).

2 consecutive EngA-type G domains span residues Pro3–Met166 and Ile206–Thr379. GTP contacts are provided by residues Gly9 to Ser16, Asp56 to Ile60, Asn118 to Asp121, Gly212 to Ser219, Asp259 to Val263, and Asn324 to Asp327. Residues Thr380–Glu464 enclose the KH-like domain.

Belongs to the TRAFAC class TrmE-Era-EngA-EngB-Septin-like GTPase superfamily. EngA (Der) GTPase family. In terms of assembly, associates with the 50S ribosomal subunit.

GTPase that plays an essential role in the late steps of ribosome biogenesis. In Vibrio cholerae serotype O1 (strain ATCC 39541 / Classical Ogawa 395 / O395), this protein is GTPase Der.